Here is a 147-residue protein sequence, read N- to C-terminus: Cyanate hydratase (147 aa).

Residues R88, E91, and S114 contribute to the active site.

Belongs to the cyanase family.

The catalysed reaction is cyanate + hydrogencarbonate + 3 H(+) = NH4(+) + 2 CO2. Its function is as follows. Catalyzes the reaction of cyanate with bicarbonate to produce ammonia and carbon dioxide. The chain is Cyanate hydratase from Acaryochloris marina (strain MBIC 11017).